The primary structure comprises 140 residues: Nucleoside diphosphate kinase (140 aa).

ATP-binding residues include K11, F59, R87, T93, R104, and N114. H117 acts as the Pros-phosphohistidine intermediate in catalysis.

It belongs to the NDK family. In terms of assembly, homotetramer. Mg(2+) is required as a cofactor.

It is found in the cytoplasm. The enzyme catalyses a 2'-deoxyribonucleoside 5'-diphosphate + ATP = a 2'-deoxyribonucleoside 5'-triphosphate + ADP. It catalyses the reaction a ribonucleoside 5'-diphosphate + ATP = a ribonucleoside 5'-triphosphate + ADP. Its function is as follows. Major role in the synthesis of nucleoside triphosphates other than ATP. The ATP gamma phosphate is transferred to the NDP beta phosphate via a ping-pong mechanism, using a phosphorylated active-site intermediate. In Cereibacter sphaeroides (strain ATCC 17025 / ATH 2.4.3) (Rhodobacter sphaeroides), this protein is Nucleoside diphosphate kinase.